A 449-amino-acid chain; its full sequence is Biotin carboxylase (449 aa).

Residues 1–445 enclose the Biotin carboxylation domain; it reads MLEKVLIANR…NIHYLEKKLG (445 aa). ATP is bound by residues K116, K159, 165-166, 201-204, H209, and H236; these read GG and EKFL. In terms of domain architecture, ATP-grasp spans 120–317; that stretch reads KDAMKRAGVP…IVKEMLRIAS (198 aa). Residue K238 coordinates hydrogencarbonate. ATP-binding residues include E276 and E288. 3 residues coordinate Mg(2+): E276, E288, and N290. Positions 276, 288, and 290 each coordinate Mn(2+). Hydrogencarbonate-binding residues include R292, V295, and R338. R292 is a catalytic residue. R338 contacts biotin.

Acetyl-CoA carboxylase is a heterohexamer of biotin carboxyl carrier protein, biotin carboxylase and the two subunits of carboxyl transferase in a 2:2 complex. The cofactor is Mg(2+). Mn(2+) is required as a cofactor.

The catalysed reaction is N(6)-biotinyl-L-lysyl-[protein] + hydrogencarbonate + ATP = N(6)-carboxybiotinyl-L-lysyl-[protein] + ADP + phosphate + H(+). It functions in the pathway lipid metabolism; malonyl-CoA biosynthesis; malonyl-CoA from acetyl-CoA: step 1/1. In terms of biological role, this protein is a component of the acetyl coenzyme A carboxylase complex; first, biotin carboxylase catalyzes the carboxylation of the carrier protein and then the transcarboxylase transfers the carboxyl group to form malonyl-CoA. The sequence is that of Biotin carboxylase (accC) from Pseudomonas aeruginosa (strain ATCC 15692 / DSM 22644 / CIP 104116 / JCM 14847 / LMG 12228 / 1C / PRS 101 / PAO1).